Here is a 2968-residue protein sequence, read N- to C-terminus: Trinucleotide repeat-containing gene 18 protein (2968 aa).

2 disordered regions span residues 1–24 (MDGR…SGLA) and 139–261 (GSPL…LAER). A compositionally biased stretch (low complexity) spans 139 to 150 (GSPLLSQLGQPS). Composition is skewed to basic and acidic residues over residues 221–233 (GKKD…EEAS) and 243–260 (QEAR…RLAE). Ser-263 carries the phosphoserine modification. Residues 304–322 (GAKEAARQDEGARLLRRTE) are compositionally biased toward basic and acidic residues. 2 disordered regions span residues 304 to 356 (GAKE…PAGV) and 381 to 488 (FDER…PAAQ). Residues 327 to 351 (GPRPCPSPLPPPPAPPKGPPAPPAA) show a composition bias toward pro residues. 3 stretches are compositionally biased toward basic and acidic residues: residues 395 to 405 (RDARAREREAG), 419 to 431 (PLDR…EKNS), and 464 to 479 (ELLK…ERAP). Residue Ser-611 is modified to Phosphoserine. Disordered stretches follow at residues 612 to 679 (PFGG…EVRH), 941 to 1002 (EHRA…SPVA), 1019 to 1055 (PAYA…PENV), 1106 to 1190 (DADG…MATP), 1212 to 1236 (SCAE…PGRT), 1279 to 1306 (LAQV…GQCP), 1497 to 1566 (KQRE…SDDY), and 1687 to 1855 (SLKS…RERA). Lys-620 is covalently cross-linked (Glycyl lysine isopeptide (Lys-Gly) (interchain with G-Cter in SUMO2)). 2 stretches are compositionally biased toward basic and acidic residues: residues 651–660 (LKRDPERPES) and 941–955 (EHRA…KRGL). The stretch at 916-949 (LQQQAAQALELQRSAQLVQERLKAQEHRAEMEEK) forms a coiled coil. Composition is skewed to low complexity over residues 966–983 (AGPG…AGPA) and 1019–1031 (PAYA…SSHP). The span at 1032–1043 (TSPPPASPPPTP) shows a compositional bias: pro residues. Positions 1046-1055 (TRKEEAPENV) are enriched in basic and acidic residues. Phosphoserine occurs at positions 1127 and 1136. Positions 1142–1162 (EPLREGPEEEPLAEREVKAEV) are enriched in basic and acidic residues. The span at 1171–1181 (ELPPLESPLPL) shows a compositional bias: pro residues. Positions 1481-1516 (LDFRMRLAEVQRQYKEKQRELVKLQRRRDSEDRREE) form a coiled coil. Residues 1497–1519 (KQRELVKLQRRRDSEDRREEPHR) show a composition bias toward basic and acidic residues. Residues 1520–1534 (SLARRGPGRPRKRTH) are compositionally biased toward basic residues. Ser-1540 carries the post-translational modification Phosphoserine. The segment covering 1549-1563 (GHSSGKLSSKSLLTS) has biased composition (low complexity). The span at 1816–1842 (SSEESFDQDESSEEEDEEEELEEEDEA) shows a compositional bias: acidic residues. Phosphoserine occurs at positions 1857 and 1863. Disordered regions lie at residues 1912–2148 (YTDS…LTPA) and 2295–2771 (LLVP…RLPS). Basic and acidic residues-rich tracts occupy residues 1957-1968 (SPDKAKLAVEKG) and 1993-2004 (LWTRRRSERIFL). The span at 2007–2024 (ASAAAPAPVSTAPATKTS) shows a compositional bias: low complexity. Residues 2034–2046 (PRKDAGRAKDRKD) are compositionally biased toward basic and acidic residues. The span at 2069-2085 (ALPSEARAPHASSLTAA) shows a compositional bias: low complexity. The span at 2093-2103 (KGKEVKKENRG) shows a compositional bias: basic and acidic residues. At Thr-2146 the chain carries Phosphothreonine. A compositionally biased stretch (basic and acidic residues) spans 2307-2316 (TSKDTGEGKD). The span at 2329–2338 (ARGRGRKPSA) shows a compositional bias: basic residues. Over residues 2365–2374 (EPSSTPGSKK) the composition is skewed to low complexity. A compositionally biased stretch (basic and acidic residues) spans 2375–2384 (SPPEPVDKRA). Positions 2390-2401 (RPAPPQPSPAPP) are enriched in pro residues. The segment covering 2411–2433 (PFAELPAPATSLAPAPLITMPAT) has biased composition (low complexity). 2 stretches are compositionally biased toward basic and acidic residues: residues 2441 to 2468 (RAAE…DHEG) and 2477 to 2487 (AKEALLLREDP). Low complexity-rich tracts occupy residues 2559-2580 (SSSS…SGSE) and 2603-2671 (SAAS…SSSS). Positions 2673 to 2685 (TDEDSSCSSDDEA) are enriched in acidic residues. Residues 2723–2736 (APQPQAPPPQPTQP) are compositionally biased toward pro residues. Ser-2771 carries the phosphoserine modification. The region spanning 2817-2962 (EMIRIGDCAV…PTTGMIFSTD (146 aa)) is the BAH domain.

In Homo sapiens (Human), this protein is Trinucleotide repeat-containing gene 18 protein.